The sequence spans 253 residues: 5'/3'-nucleotidase SurE (253 aa).

Aspartate 8, aspartate 9, serine 39, and asparagine 92 together coordinate a divalent metal cation.

The protein belongs to the SurE nucleotidase family. The cofactor is a divalent metal cation.

It is found in the cytoplasm. It carries out the reaction a ribonucleoside 5'-phosphate + H2O = a ribonucleoside + phosphate. The catalysed reaction is a ribonucleoside 3'-phosphate + H2O = a ribonucleoside + phosphate. The enzyme catalyses [phosphate](n) + H2O = [phosphate](n-1) + phosphate + H(+). Its function is as follows. Nucleotidase with a broad substrate specificity as it can dephosphorylate various ribo- and deoxyribonucleoside 5'-monophosphates and ribonucleoside 3'-monophosphates with highest affinity to 3'-AMP. Also hydrolyzes polyphosphate (exopolyphosphatase activity) with the preference for short-chain-length substrates (P20-25). Might be involved in the regulation of dNTP and NTP pools, and in the turnover of 3'-mononucleotides produced by numerous intracellular RNases (T1, T2, and F) during the degradation of various RNAs. This is 5'/3'-nucleotidase SurE from Cronobacter sakazakii (strain ATCC BAA-894) (Enterobacter sakazakii).